The following is a 434-amino-acid chain: Glutamyl-tRNA reductase (434 aa).

Residues 49–52 (TCNR), S109, 114–116 (EPQ), and Q120 each bind substrate. The active-site Nucleophile is the C50. 189–194 (GAGEMC) is a binding site for NADP(+).

It belongs to the glutamyl-tRNA reductase family. As to quaternary structure, homodimer.

It carries out the reaction (S)-4-amino-5-oxopentanoate + tRNA(Glu) + NADP(+) = L-glutamyl-tRNA(Glu) + NADPH + H(+). It functions in the pathway porphyrin-containing compound metabolism; protoporphyrin-IX biosynthesis; 5-aminolevulinate from L-glutamyl-tRNA(Glu): step 1/2. In terms of biological role, catalyzes the NADPH-dependent reduction of glutamyl-tRNA(Glu) to glutamate 1-semialdehyde (GSA). The polypeptide is Glutamyl-tRNA reductase (Geobacter sulfurreducens (strain ATCC 51573 / DSM 12127 / PCA)).